The primary structure comprises 294 residues: Cytidine deaminase (294 aa).

CMP/dCMP-type deaminase domains are found at residues 48–168 (DEDA…FGPK) and 186–294 (LTGD…VLLG). 89–91 (NME) is a binding site for substrate. Zn(2+) is bound at residue His-102. Glu-104 (proton donor) is an active-site residue. Zn(2+) is bound by residues Cys-129 and Cys-132.

The protein belongs to the cytidine and deoxycytidylate deaminase family. Homodimer. Requires Zn(2+) as cofactor.

The enzyme catalyses cytidine + H2O + H(+) = uridine + NH4(+). The catalysed reaction is 2'-deoxycytidine + H2O + H(+) = 2'-deoxyuridine + NH4(+). In terms of biological role, this enzyme scavenges exogenous and endogenous cytidine and 2'-deoxycytidine for UMP synthesis. This is Cytidine deaminase from Salmonella paratyphi A (strain ATCC 9150 / SARB42).